A 190-amino-acid polypeptide reads, in one-letter code: Superoxide dismutase [Cu-Zn] (190 aa).

A signal peptide spans methionine 1–alanine 23. Histidine 83, histidine 85, and histidine 108 together coordinate Cu cation. Cysteine 90 and cysteine 186 are disulfide-bonded. 4 residues coordinate Zn(2+): histidine 108, histidine 117, histidine 126, and aspartate 129. The segment at methionine 162 to glycine 181 is disordered. A Cu cation-binding site is contributed by histidine 164.

The protein belongs to the Cu-Zn superoxide dismutase family. Homodimer. Cu cation is required as a cofactor. The cofactor is Zn(2+).

Its subcellular location is the periplasm. It catalyses the reaction 2 superoxide + 2 H(+) = H2O2 + O2. In terms of biological role, destroys radicals which are normally produced within the cells and which are toxic to biological systems. This Actinobacillus pleuropneumoniae (Haemophilus pleuropneumoniae) protein is Superoxide dismutase [Cu-Zn] (sodC).